The chain runs to 1482 residues: Chromosome partition protein MukB (1482 aa).

34 to 41 is an ATP binding site; it reads GGNGAGKS. Residues 333–665 are a coiled coil; sequence ASDHLNLVQT…LEKQIERLSQ (333 aa). A flexible hinge region spans residues 666 to 783; the sequence is PSGAEDSRMI…ELPLFGRAAR (118 aa). Coiled coils occupy residues 784–1116 and 1209–1260; these read ENRL…AKAG and VDAI…MLNQ.

The protein belongs to the SMC family. MukB subfamily. In terms of assembly, homodimerization via its hinge domain. Binds to DNA via its C-terminal region. Interacts, and probably forms a ternary complex, with MukE and MukF via its C-terminal region. The complex formation is stimulated by calcium or magnesium. Interacts with tubulin-related protein FtsZ.

The protein resides in the cytoplasm. The protein localises to the nucleoid. In terms of biological role, plays a central role in chromosome condensation, segregation and cell cycle progression. Functions as a homodimer, which is essential for chromosome partition. Involved in negative DNA supercoiling in vivo, and by this means organize and compact chromosomes. May achieve or facilitate chromosome segregation by condensation DNA from both sides of a centrally located replisome during cell division. The chain is Chromosome partition protein MukB from Photorhabdus laumondii subsp. laumondii (strain DSM 15139 / CIP 105565 / TT01) (Photorhabdus luminescens subsp. laumondii).